We begin with the raw amino-acid sequence, 169 residues long: Lipoprotein signal peptidase (169 aa).

4 helical membrane passes run 10–30 (LPWLWITVLVFVLDQLSKAFF), 40–60 (IVVIPDLFSWTLAYNTGAAFS), 68–88 (WQRWLFALIAIVVSAILVVWL), and 94–114 (GETWLAIALALVLGGALGNLY). Active-site residues include Asp-124 and Asp-143. Residues 135 to 155 (YFPAFNLADSAITVGAVMLAL) traverse the membrane as a helical segment.

This sequence belongs to the peptidase A8 family.

The protein resides in the cell inner membrane. The enzyme catalyses Release of signal peptides from bacterial membrane prolipoproteins. Hydrolyzes -Xaa-Yaa-Zaa-|-(S,diacylglyceryl)Cys-, in which Xaa is hydrophobic (preferably Leu), and Yaa (Ala or Ser) and Zaa (Gly or Ala) have small, neutral side chains.. It participates in protein modification; lipoprotein biosynthesis (signal peptide cleavage). In terms of biological role, this protein specifically catalyzes the removal of signal peptides from prolipoproteins. This Pseudomonas aeruginosa (strain UCBPP-PA14) protein is Lipoprotein signal peptidase.